A 505-amino-acid chain; its full sequence is 2,3-bisphosphoglycerate-independent phosphoglycerate mutase (505 aa).

Mn(2+) is bound by residues Asp12 and Ser62. Ser62 functions as the Phosphoserine intermediate in the catalytic mechanism. Substrate-binding positions include His123, Arg153–Asp154, Arg185, Arg191, Arg257–Arg260, and Lys330. Asp397, His401, Asp438, His439, and His456 together coordinate Mn(2+).

Belongs to the BPG-independent phosphoglycerate mutase family. In terms of assembly, monomer. Mn(2+) serves as cofactor.

The enzyme catalyses (2R)-2-phosphoglycerate = (2R)-3-phosphoglycerate. It participates in carbohydrate degradation; glycolysis; pyruvate from D-glyceraldehyde 3-phosphate: step 3/5. Its function is as follows. Catalyzes the interconversion of 2-phosphoglycerate and 3-phosphoglycerate. In Staphylococcus saprophyticus subsp. saprophyticus (strain ATCC 15305 / DSM 20229 / NCIMB 8711 / NCTC 7292 / S-41), this protein is 2,3-bisphosphoglycerate-independent phosphoglycerate mutase.